The primary structure comprises 299 residues: Regucalcin (299 aa).

Residue Glu-18 participates in a divalent metal cation binding. Substrate is bound by residues Arg-101, Asn-103, and Glu-121. Position 144 is an N6-succinyllysine (Lys-144). 2 residues coordinate a divalent metal cation: Asn-154 and Asp-204. Residue Asp-204 is the Proton donor/acceptor of the active site. 2 positions are modified to N6-succinyllysine: Lys-244 and Lys-253.

This sequence belongs to the SMP-30/CGR1 family. In terms of assembly, monomer. Zn(2+) is required as a cofactor. Requires Mn(2+) as cofactor. The cofactor is Ca(2+). Mg(2+) serves as cofactor.

It localises to the cytoplasm. It carries out the reaction D-glucono-1,5-lactone + H2O = D-gluconate + H(+). The protein operates within cofactor biosynthesis; L-ascorbate biosynthesis via UDP-alpha-D-glucuronate pathway; L-ascorbate from UDP-alpha-D-glucuronate: step 3/4. Gluconolactonase with low activity towards other sugar lactones, including gulonolactone and galactonolactone. Catalyzes a key step in ascorbic acid (vitamin C) biosynthesis. Can also hydrolyze diisopropyl phosphorofluoridate and phenylacetate (in vitro). Calcium-binding protein. Modulates Ca(2+) signaling, and Ca(2+)-dependent cellular processes and enzyme activities. In Oryctolagus cuniculus (Rabbit), this protein is Regucalcin (RGN).